The following is a 481-amino-acid chain: UDP-N-acetylmuramoyl-L-alanyl-D-glutamate--L-lysine ligase (481 aa).

A UDP-N-acetyl-alpha-D-muramoyl-L-alanyl-D-glutamate-binding site is contributed by Ser-42. 118 to 124 (GTKGKTT) contributes to the ATP binding site. Residues Gln-158, 160–161 (TT), Ser-187, and Arg-195 each bind UDP-N-acetyl-alpha-D-muramoyl-L-alanyl-D-glutamate. Lys-229 is subject to N6-carboxylysine. An L-lysine recognition motif motif is present at residues 404–407 (DDPN).

The protein belongs to the MurCDEF family. MurE subfamily. Post-translationally, carboxylation is probably crucial for Mg(2+) binding and, consequently, for the gamma-phosphate positioning of ATP.

It is found in the cytoplasm. The catalysed reaction is UDP-N-acetyl-alpha-D-muramoyl-L-alanyl-D-glutamate + L-lysine + ATP = UDP-N-acetyl-alpha-D-muramoyl-L-alanyl-gamma-D-glutamyl-L-lysine + ADP + phosphate + H(+). The protein operates within cell wall biogenesis; peptidoglycan biosynthesis. Functionally, catalyzes the addition of L-lysine to the nucleotide precursor UDP-N-acetylmuramoyl-L-alanyl-D-glutamate (UMAG) in the biosynthesis of bacterial cell-wall peptidoglycan. The protein is UDP-N-acetylmuramoyl-L-alanyl-D-glutamate--L-lysine ligase of Streptococcus pyogenes serotype M28 (strain MGAS6180).